We begin with the raw amino-acid sequence, 650 residues long: Acetyl-coenzyme A synthetase (650 aa).

Residues 191 to 194 (RGGR), Thr311, and Asn335 contribute to the CoA site. Residues 387-389 (GEP), 411-416 (DTWWQT), Asp500, and Arg515 each bind ATP. Ser523 lines the CoA pocket. Arg526 lines the ATP pocket. Residues Val537, His539, and Val542 each contribute to the Mg(2+) site. Residue Arg584 coordinates CoA. Lys609 carries the post-translational modification N6-acetyllysine.

It belongs to the ATP-dependent AMP-binding enzyme family. Mg(2+) serves as cofactor. In terms of processing, acetylated. Deacetylation by the SIR2-homolog deacetylase activates the enzyme.

The catalysed reaction is acetate + ATP + CoA = acetyl-CoA + AMP + diphosphate. Functionally, catalyzes the conversion of acetate into acetyl-CoA (AcCoA), an essential intermediate at the junction of anabolic and catabolic pathways. AcsA undergoes a two-step reaction. In the first half reaction, AcsA combines acetate with ATP to form acetyl-adenylate (AcAMP) intermediate. In the second half reaction, it can then transfer the acetyl group from AcAMP to the sulfhydryl group of CoA, forming the product AcCoA. The polypeptide is Acetyl-coenzyme A synthetase (Shewanella sp. (strain ANA-3)).